A 126-amino-acid chain; its full sequence is Small ribosomal subunit protein bS6 (126 aa).

It belongs to the bacterial ribosomal protein bS6 family.

Its function is as follows. Binds together with bS18 to 16S ribosomal RNA. In Actinobacillus succinogenes (strain ATCC 55618 / DSM 22257 / CCUG 43843 / 130Z), this protein is Small ribosomal subunit protein bS6.